The following is a 320-amino-acid chain: Esterase LipI (320 aa).

Catalysis depends on residues serine 165, aspartate 261, and histidine 291.

The protein belongs to the 'GDXG' lipolytic enzyme family.

The enzyme catalyses a fatty acid ester + H2O = an aliphatic alcohol + a fatty acid + H(+). It carries out the reaction a butanoate ester + H2O = an aliphatic alcohol + butanoate + H(+). The catalysed reaction is an octanoate ester + H2O = an aliphatic alcohol + octanoate + H(+). It catalyses the reaction decanoate ester + H2O = decanoate + an aliphatic alcohol + H(+). The enzyme catalyses an acetyl ester + H2O = an aliphatic alcohol + acetate + H(+). It carries out the reaction a dodecanoate ester + H2O = an aliphatic alcohol + dodecanoate + H(+). Inhibited by ionic detergents SDS (anions) and CTAB (cationic). Strongly inhibited by Zn(2+). In terms of biological role, esterase that can hydrolyze short-chain esters with the carbon chain containing 2 to 12 carbon atoms. In vitro, pNP-butyrate is the preferred substrate. In Mycobacterium tuberculosis (strain ATCC 25618 / H37Rv), this protein is Esterase LipI.